Consider the following 394-residue polypeptide: uncharacterized protein (394 aa).

Transmembrane regions (helical) follow at residues 13–33 (LITT…TTMI), 35–55 (MAPT…VLPT), 73–95 (TTMT…TLTV), 110–130 (ALTV…HMVL), 152–172 (IHMV…PTVL), 179–198 (LMVL…TLTV), 216–236 (VLLA…TVLP), 241–261 (VLMV…HMVL), 267–287 (VLMV…PTVL), 293–313 (VLMV…TLTV), 340–360 (MMTL…VTTI), and 372–392 (ILLC…YVSA).

The protein resides in the membrane. This is an uncharacterized protein from Saccharomyces cerevisiae (strain ATCC 204508 / S288c) (Baker's yeast).